We begin with the raw amino-acid sequence, 638 residues long: Mediator of RNA polymerase II transcription subunit 17 (638 aa).

Positions 1–21 (MSDSFNLPLRPLTEKRERPDP) are disordered.

Belongs to the Mediator complex subunit 17 family. In terms of assembly, component of the Mediator complex.

It is found in the nucleus. In terms of biological role, component of the Mediator complex, a coactivator involved in the regulated transcription of nearly all RNA polymerase II-dependent genes. Mediator functions as a bridge to convey information from gene-specific regulatory proteins to the basal RNA polymerase II transcription machinery. Mediator is recruited to promoters by direct interactions with regulatory proteins and serves as a scaffold for the assembly of a functional preinitiation complex with RNA polymerase II and the general transcription factors. The polypeptide is Mediator of RNA polymerase II transcription subunit 17 (srb4) (Aspergillus oryzae (strain ATCC 42149 / RIB 40) (Yellow koji mold)).